Here is a 146-residue protein sequence, read N- to C-terminus: UPF0178 protein BC_3040 (146 aa).

It belongs to the UPF0178 family.

This chain is UPF0178 protein BC_3040, found in Bacillus cereus (strain ATCC 14579 / DSM 31 / CCUG 7414 / JCM 2152 / NBRC 15305 / NCIMB 9373 / NCTC 2599 / NRRL B-3711).